The primary structure comprises 341 residues: Chorismate synthase (341 aa).

2 disordered regions span residues 45-64 and 109-134; these read LERRRPGHHGSGQIVSGRQE and HADDMWRNKFGHSDHRGGGRSSGRET. R48 contributes to the NADP(+) binding site. Residues 128-130, G280, 295-299, and R308 each bind FMN; these read RSS and KPTSS.

The protein belongs to the chorismate synthase family. As to quaternary structure, homotetramer. It depends on FMNH2 as a cofactor.

The catalysed reaction is 5-O-(1-carboxyvinyl)-3-phosphoshikimate = chorismate + phosphate. It participates in metabolic intermediate biosynthesis; chorismate biosynthesis; chorismate from D-erythrose 4-phosphate and phosphoenolpyruvate: step 7/7. Its function is as follows. Catalyzes the anti-1,4-elimination of the C-3 phosphate and the C-6 proR hydrogen from 5-enolpyruvylshikimate-3-phosphate (EPSP) to yield chorismate, which is the branch point compound that serves as the starting substrate for the three terminal pathways of aromatic amino acid biosynthesis. This reaction introduces a second double bond into the aromatic ring system. This is Chorismate synthase from Bdellovibrio bacteriovorus (strain ATCC 15356 / DSM 50701 / NCIMB 9529 / HD100).